Reading from the N-terminus, the 84-residue chain is Small ribosomal subunit protein bS18 (84 aa).

This sequence belongs to the bacterial ribosomal protein bS18 family. Part of the 30S ribosomal subunit. Forms a tight heterodimer with protein bS6.

In terms of biological role, binds as a heterodimer with protein bS6 to the central domain of the 16S rRNA, where it helps stabilize the platform of the 30S subunit. The sequence is that of Small ribosomal subunit protein bS18 from Ruthia magnifica subsp. Calyptogena magnifica.